The chain runs to 407 residues: GTPase Obg (407 aa).

The Obg domain maps to 1–159; sequence MKFVDEVSIR…RDLKLEMKVL (159 aa). The segment at 128-148 is disordered; sequence TRFKSSTNRAPRQTTPGKPGE. A compositionally biased stretch (polar residues) spans 129–143; it reads RFKSSTNRAPRQTTP. The OBG-type G domain occupies 160–333; it reads ADVGLLGLPN…LTRDIMRYLE (174 aa). GTP contacts are provided by residues 166-173, 191-195, 213-216, 283-286, and 314-316; these read GLPNAGKS, FTTLV, DIPG, NKCD, and SAI. Positions 173 and 193 each coordinate Mg(2+). The interval 376-407 is disordered; the sequence is SGVKSVHDIGDDDWDEEDVDDEDGPEIIYVRD. Positions 385 to 400 are enriched in acidic residues; the sequence is GDDDWDEEDVDDEDGP.

It belongs to the TRAFAC class OBG-HflX-like GTPase superfamily. OBG GTPase family. Monomer. Requires Mg(2+) as cofactor.

It localises to the cytoplasm. In terms of biological role, an essential GTPase which binds GTP, GDP and possibly (p)ppGpp with moderate affinity, with high nucleotide exchange rates and a fairly low GTP hydrolysis rate. Plays a role in control of the cell cycle, stress response, ribosome biogenesis and in those bacteria that undergo differentiation, in morphogenesis control. The chain is GTPase Obg from Pseudomonas fluorescens (strain Pf0-1).